The chain runs to 224 residues: Fibronectin type III domain-containing protein 9 (224 aa).

One can recognise a Fibronectin type-III domain in the interval 1–101 (MNIEVGNISY…FHTLDKSPLA (101 aa)). Residues 113-133 (LWVLMAILLACFTAVLAFICL) form a helical membrane-spanning segment. A disordered region spans residues 175–224 (LQGLPLVEMPRKNSRDGAELDPEANQDAPDAGALQRGGGDPPAILPHCGE). Residues 183-192 (MPRKNSRDGA) show a composition bias toward basic and acidic residues.

The protein localises to the membrane. The sequence is that of Fibronectin type III domain-containing protein 9 (FNDC9) from Homo sapiens (Human).